The following is a 127-amino-acid chain: Large ribosomal subunit protein uL22 (127 aa).

The protein belongs to the universal ribosomal protein uL22 family. In terms of assembly, part of the 50S ribosomal subunit.

Its function is as follows. This protein binds specifically to 23S rRNA; its binding is stimulated by other ribosomal proteins, e.g. L4, L17, and L20. It is important during the early stages of 50S assembly. It makes multiple contacts with different domains of the 23S rRNA in the assembled 50S subunit and ribosome. In terms of biological role, the globular domain of the protein is located near the polypeptide exit tunnel on the outside of the subunit, while an extended beta-hairpin is found that lines the wall of the exit tunnel in the center of the 70S ribosome. This Methylobacterium sp. (strain 4-46) protein is Large ribosomal subunit protein uL22.